Consider the following 997-residue polypeptide: Glutamate [NMDA] receptor subunit 1 (997 aa).

Residues 1–26 (MAVAGFVFCWPLLGLTIVLLVAPIDA) form the signal peptide. The Extracellular portion of the chain corresponds to 27–573 (AQRHTASDNP…TLVSFLQPFS (547 aa)). Residues Asn258, Asn314, Asn345, Asn397, Asn454, Asn481, and Asn501 are each glycosylated (N-linked (GlcNAc...) asparagine). Glycine is bound by residues 530–532 (PLT) and Arg537. A helical transmembrane segment spans residues 574-594 (NTLWILVMVSVHVVALVLYLL). Over 595 to 651 (DRFSPFGRFKLSHSDSNEEKALNLSSAVWFAWGVLLNSGIGEGTPRSFSARVLGMVW) the chain is Cytoplasmic. A helical transmembrane segment spans residues 652-672 (AGFAMIIVASYTANLAAFLVL). Topologically, residues 673–831 (ERPKTKLSGI…KTPNTLGLKN (159 aa)) are extracellular. N-linked (GlcNAc...) asparagine glycosylation is present at Asn693. Glycine contacts are provided by Ser703 and Asp747. The helical transmembrane segment at 832-852 (MAGVFILVGVGIAGGVGLIII) threads the bilayer. The Cytoplasmic segment spans residues 853–997 (EVIYKKHQVK…YTSDVSHLVV (145 aa)). The tract at residues 970-997 (LGKTRPQQSVLPPRYSPGYTSDVSHLVV) is disordered. Positions 987–997 (GYTSDVSHLVV) are enriched in polar residues.

The protein belongs to the glutamate-gated ion channel (TC 1.A.10.1) family. As to quaternary structure, forms a heteromeric NMDA channel with Nmdar2.

It localises to the cell membrane. Its subcellular location is the postsynaptic cell membrane. It is found in the postsynaptic density. Functionally, NMDA receptor subtype of glutamate-gated ion channels with high calcium permeability and voltage-dependent sensitivity to magnesium. Mediated by glycine. This protein plays a key role in synaptic plasticity, synaptogenesis, excitotoxicity, memory acquisition and learning. It mediates neuronal functions in glutamate neurotransmission. Is involved in the cell surface targeting of NMDA receptors. Plays a role in associative learning and in long-term memory consolidation. This is Glutamate [NMDA] receptor subunit 1 from Drosophila yakuba (Fruit fly).